Here is a 592-residue protein sequence, read N- to C-terminus: Calnexin (592 aa).

The N-terminal stretch at methionine 1–alanine 20 is a signal peptide. The Lumenal segment spans residues histidine 21–proline 481. 2 residues coordinate Ca(2+): serine 74 and aspartate 117. Lysine 137 bears the N6-acetyllysine mark. Cysteine 160 and cysteine 194 are oxidised to a cystine. Tyrosine 164, lysine 166, tyrosine 185, and aspartate 192 together coordinate an alpha-D-glucoside. The tract at residues glycine 260–aspartate 345 is disordered. Basic and acidic residues predominate over residues arginine 274 to lysine 319. Positions isoleucine 276 to glutamate 409 are p domain (Extended arm). A run of 5 repeats spans residues aspartate 278–arginine 290, aspartate 295–aspartate 307, aspartate 314–aspartate 326, aspartate 333–aspartate 345, and glycine 348–proline 358. 2 4 X approximate repeats regions span residues aspartate 278–aspartate 345 and glycine 348–proline 405. Residues tryptophan 323–aspartate 345 are compositionally biased toward acidic residues. The tract at residues aspartate 326–lysine 359 is interaction with PPIB. A disulfide bridge connects residues cysteine 360 and cysteine 366. Tandem repeats lie at residues glycine 367–proline 377, glycine 381–proline 391, and glycine 395–proline 405. An alpha-D-glucoside is bound at residue glutamate 425. Ca(2+) is bound at residue aspartate 436. Residues tryptophan 482–cysteine 502 form a helical membrane-spanning segment. S-palmitoyl cysteine attachment occurs at residues cysteine 502 and cysteine 503. Residues cysteine 503–glutamate 592 are Cytoplasmic-facing. Residues cysteine 503 to glutamate 592 form a sufficient to mediate interaction with SGIP1 region. A disordered region spans residues alanine 511–glutamate 592. Positions lysine 525–lysine 547 are enriched in acidic residues. Serine 554 is subject to Phosphoserine. Threonine 562 is modified (phosphothreonine). At serine 564 the chain carries Phosphoserine; by MAPK3. A Phosphoserine modification is found at serine 583.

It belongs to the calreticulin family. As to quaternary structure, interacts with MAPK3/ERK1. Interacts with KCNH2. Associates with ribosomes. Interacts with SGIP1; involved in negative regulation of endocytosis. The palmitoylated form interacts with the ribosome-translocon complex component SSR1, promoting efficient folding of glycoproteins. Interacts with SERPINA2P/SERPINA2 and with the S and Z variants of SERPINA1. Interacts with PPIB. Interacts with ZNRF4. Interacts with SMIM22. Interacts with TMX2. Interacts with TMEM35A/NACHO and CHRNA7. Interacts with reticulophagy regulators RETREG2 and RETREG3. Interacts with DNM1L; may form part of a larger protein complex at the ER-mitochondrial interface during mitochondrial fission. Interacts with ADAM7. Phosphorylated at Ser-564 by MAPK3/ERK1. Phosphorylation by MAPK3/ERK1 increases its association with ribosomes. In terms of processing, palmitoylation by DHHC6 leads to the preferential localization to the perinuclear rough ER. It mediates the association of calnexin with the ribosome-translocon complex (RTC) which is required for efficient folding of glycosylated proteins. Post-translationally, ubiquitinated, leading to proteasomal degradation. Probably ubiquitinated by ZNRF4.

The protein localises to the endoplasmic reticulum membrane. It is found in the mitochondrion membrane. Its subcellular location is the melanosome membrane. Its function is as follows. Calcium-binding protein that interacts with newly synthesized monoglucosylated glycoproteins in the endoplasmic reticulum. It may act in assisting protein assembly and/or in the retention within the ER of unassembled protein subunits. It seems to play a major role in the quality control apparatus of the ER by the retention of incorrectly folded proteins. Associated with partial T-cell antigen receptor complexes that escape the ER of immature thymocytes, it may function as a signaling complex regulating thymocyte maturation. Additionally it may play a role in receptor-mediated endocytosis at the synapse. The polypeptide is Calnexin (CANX) (Pongo abelii (Sumatran orangutan)).